We begin with the raw amino-acid sequence, 531 residues long: Zinc finger protein 837 (531 aa).

The segment at 1 to 101 (MEAPAQKAGQ…CGPTSSQNPE (101 aa)) is disordered. A compositionally biased stretch (basic and acidic residues) spans 24-50 (AREKRPEEPRPLEEDRAGSRPTQKGDL). 8 consecutive C2H2-type zinc fingers follow at residues 271 to 293 (YACD…QRIH), 299 to 321 (YECA…QKTH), 363 to 385 (YECA…RRVH), 391 to 413 (YACP…QRTH), 419 to 441 (YACP…QRAH), 447 to 469 (YGCS…ERLH), 475 to 497 (YICR…LRTH), and 503 to 525 (YACG…RKRH).

Belongs to the krueppel C2H2-type zinc-finger protein family.

Its subcellular location is the nucleus. Its function is as follows. May be involved in transcriptional regulation. In Homo sapiens (Human), this protein is Zinc finger protein 837 (ZNF837).